Consider the following 430-residue polypeptide: KICSTOR complex protein kaptin (430 aa).

Positions 410-430 (RKHQQGLGDRVGPRPVEHPAS) are disordered. Basic and acidic residues predominate over residues 420–430 (VGPRPVEHPAS).

Part of the KICSTOR complex composed of KPTN, ITFG2, KICS2 and SZT2. SZT2 probably serves as a link between the other three proteins in the KICSTOR complex and mediates the direct interaction with the GATOR1 complex. May associate with F-actin filaments.

Its subcellular location is the lysosome membrane. The protein localises to the cell projection. The protein resides in the lamellipodium. It is found in the stereocilium. Functionally, as part of the KICSTOR complex functions in the amino acid-sensing branch of the TORC1 signaling pathway. Recruits, in an amino acid-independent manner, the GATOR1 complex to the lysosomal membranes and allows its interaction with GATOR2 and the RAG GTPases. Functions upstream of the RAG GTPases and is required to negatively regulate mTORC1 signaling in absence of amino acids. In absence of the KICSTOR complex mTORC1 is constitutively localized to the lysosome and activated. The KICSTOR complex is also probably involved in the regulation of mTORC1 by glucose. The protein is KICSTOR complex protein kaptin of Mus musculus (Mouse).